Consider the following 624-residue polypeptide: RQC trigger complex subunit CUE3 (624 aa).

One can recognise a CUE domain in the interval 316–359 (VNEEQLSALMELFPQFSKYQLSQTLLAYDNNIELVTNKIFEDPT). Disordered stretches follow at residues 366–390 (REPA…ELSI), 435–469 (RDDT…DDSN), and 546–624 (SKTG…NNAI). The residue at position 377 (serine 377) is a Phosphoserine. Basic and acidic residues-rich tracts occupy residues 443 to 455 (DVNR…RIGL) and 568 to 589 (EQAK…TEQK). Residues 590–617 (KRQHAKNEKRKGARANHNRKKGHDKKLA) show a composition bias toward basic residues.

As to quaternary structure, component of the RQT (ribosome quality control trigger) complex, composed of SLH1, CUE3, and RQT4. Interacts with ubiquitin; the interaction is direct. Interacts with SLH1. Interacts with RQT4. Interacts with HEL2. Associates with translating ribosomes.

It is found in the cytoplasm. Its function is as follows. Involved in activation of the ribosome quality control (RQC) pathway, a pathway that degrades nascent peptide chains during problematic translation. Specifically recognizes and binds RPS20/uS10 ubiquitinated by HEL2, promoting recruitment of the RQT (ribosome quality control trigger) complex on stalled ribosomes, followed by disassembly of stalled ribosomes. The chain is RQC trigger complex subunit CUE3 (CUE3) from Saccharomyces cerevisiae (strain ATCC 204508 / S288c) (Baker's yeast).